The primary structure comprises 237 residues: Ribonuclease PH (237 aa).

Phosphate contacts are provided by residues Arg86 and 124-126 (GTR).

This sequence belongs to the RNase PH family. Homohexameric ring arranged as a trimer of dimers.

It catalyses the reaction tRNA(n+1) + phosphate = tRNA(n) + a ribonucleoside 5'-diphosphate. Its function is as follows. Phosphorolytic 3'-5' exoribonuclease that plays an important role in tRNA 3'-end maturation. Removes nucleotide residues following the 3'-CCA terminus of tRNAs; can also add nucleotides to the ends of RNA molecules by using nucleoside diphosphates as substrates, but this may not be physiologically important. Probably plays a role in initiation of 16S rRNA degradation (leading to ribosome degradation) during starvation. The sequence is that of Ribonuclease PH from Methylobacterium sp. (strain 4-46).